We begin with the raw amino-acid sequence, 401 residues long: 1-deoxy-D-xylulose 5-phosphate reductoisomerase (401 aa).

NADPH-binding residues include Thr10, Gly11, Ser12, Ile13, Asn38, and Asn124. Lys125 serves as a coordination point for 1-deoxy-D-xylulose 5-phosphate. Glu126 is an NADPH binding site. Asp150 serves as a coordination point for Mn(2+). The 1-deoxy-D-xylulose 5-phosphate site is built by Ser151, Glu152, Ser186, and His209. A Mn(2+)-binding site is contributed by Glu152. Gly215 contributes to the NADPH binding site. 4 residues coordinate 1-deoxy-D-xylulose 5-phosphate: Ser222, Asn227, Lys228, and Glu231. Residue Glu231 participates in Mn(2+) binding.

The protein belongs to the DXR family. The cofactor is Mg(2+). Mn(2+) serves as cofactor.

It carries out the reaction 2-C-methyl-D-erythritol 4-phosphate + NADP(+) = 1-deoxy-D-xylulose 5-phosphate + NADPH + H(+). The protein operates within isoprenoid biosynthesis; isopentenyl diphosphate biosynthesis via DXP pathway; isopentenyl diphosphate from 1-deoxy-D-xylulose 5-phosphate: step 1/6. Its function is as follows. Catalyzes the NADPH-dependent rearrangement and reduction of 1-deoxy-D-xylulose-5-phosphate (DXP) to 2-C-methyl-D-erythritol 4-phosphate (MEP). The protein is 1-deoxy-D-xylulose 5-phosphate reductoisomerase of Vibrio campbellii (strain ATCC BAA-1116).